The chain runs to 59 residues: Small ribosomal subunit protein bS21 (59 aa).

Residues 27 to 59 (GLMAEMRKREHYEKPSVRRKKKAQARNKKKRYA) form a disordered region. Residues 31-42 (EMRKREHYEKPS) show a composition bias toward basic and acidic residues. Basic residues predominate over residues 43-59 (VRRKKKAQARNKKKRYA).

The protein belongs to the bacterial ribosomal protein bS21 family.

The polypeptide is Small ribosomal subunit protein bS21 (Carboxydothermus hydrogenoformans (strain ATCC BAA-161 / DSM 6008 / Z-2901)).